Reading from the N-terminus, the 142-residue chain is Large ribosomal subunit protein bL17 (142 aa).

Belongs to the bacterial ribosomal protein bL17 family. As to quaternary structure, part of the 50S ribosomal subunit. Contacts protein L32.

The protein is Large ribosomal subunit protein bL17 of Chlamydia pneumoniae (Chlamydophila pneumoniae).